The chain runs to 682 residues: Epithelial sodium channel subunit alpha (682 aa).

Over 1–111 (MLMRLLPLPS…CSKHNRMKTA (111 aa)) the chain is Cytoplasmic. The disordered stretch occupies residues 34–69 (AQGPLPPQPLQGPLKGDKCEQPGLGPEPTAPQQHTE). A helical membrane pass occupies residues 112–132 (FWAVLWLCTFGMMYWQFALLF). Residues 133–586 (GEYFSYPVSL…SQWSLWFGSS (454 aa)) are Extracellular-facing. 10 cysteine pairs are disulfide-bonded: cysteine 159–cysteine 329, cysteine 253–cysteine 260, cysteine 306–cysteine 313, cysteine 418–cysteine 503, cysteine 440–cysteine 480, cysteine 440–cysteine 499, cysteine 444–cysteine 495, cysteine 453–cysteine 480, cysteine 453–cysteine 503, and cysteine 455–cysteine 469. An N-linked (GlcNAc...) asparagine glycan is attached at asparagine 191. Residues 201–267 (RSRRSLADTL…SDCFYQTSSS (67 aa)) are gating release of inhibition by proteolysis (GRIP); protease-sensitive region that is responsible for the proteolytic activation of the channel. A disordered region spans residues 221 to 240 (PEPRRARSSDPSSVRDNNPR). Asparagine 504 is a glycosylation site (N-linked (GlcNAc...) asparagine). A helical membrane pass occupies residues 587 to 607 (VLSVVEMAEFMFDLLVITLLM). The Cytoplasmic segment spans residues 608-682 (LLRRFRSRYW…SSAACAPREP (75 aa)). Positions 653 to 657 (PPPAY) match the PY motif; recruits WW domain-containing proteins and is thereby required for ubiquitination and inhibition of the channel by NEDD4 and NEDD4L motif.

This sequence belongs to the amiloride-sensitive sodium channel (TC 1.A.6) family. SCNN1A subfamily. Heterotrimer; containing an alpha/SCNN1A, a beta/SCNN1B and a gamma/SCNN1G subunit. Interacts with WWP1 (via WW domains). Interacts with WWP2 (via WW domains); inhibits the channel. Interacts with BPIFA1; the interaction is indirect via SCNN1B and inhibits the proteolytic processing of SCNN1A and SCNN1G and the activation of ENaC. Interacts with the full-length immature form of PCSK9 (pro-PCSK9). In terms of processing, ubiquitinated. Can be ubiquitinated at multiple sites and undergo monoubiquitination and polyubiquitination. Ubiquitination by NEDD4 or NEDD4L inhibits the ENaC channel through endocytosis, intracellular retention and degradation of its individual subunits. N-glycosylated. Post-translationally, ENaC is activated through the proteolytic maturation of its subunits. Furin cleaves the SCNN1A subunit, which results in a stepwise increase in the open probability of the channel due to the release of an inhibitory tract. BPIFA1, which is recruited by the SCNN1B subunit, prevents the proteolytic activation of ENaC.

It is found in the apical cell membrane. The protein resides in the cell projection. It localises to the cilium. The protein localises to the cytoplasmic granule. Its subcellular location is the cytoplasm. It is found in the cytoplasmic vesicle. The protein resides in the secretory vesicle. It localises to the acrosome. The protein localises to the flagellum. The enzyme catalyses Na(+)(in) = Na(+)(out). Originally identified and characterized by its inhibition by the diuretic drug amiloride. In terms of biological role, this is one of the three pore-forming subunits of the heterotrimeric epithelial sodium channel (ENaC), a critical regulator of sodium balance and fluid homeostasis. ENaC operates in epithelial tissues, where it mediates the electrodiffusion of sodium ions from extracellular fluid through the apical membrane of cells, with water following osmotically. It plays a key role in maintaining sodium homeostasis through electrogenic sodium reabsorption in the kidneys. Additionally, ENaC is essential for airway surface liquid homeostasis, which is crucial for proper mucus clearance. The protein is Epithelial sodium channel subunit alpha of Cavia porcellus (Guinea pig).